Consider the following 370-residue polypeptide: 4-hydroxy-3-methylbut-2-en-1-yl diphosphate synthase (flavodoxin) (370 aa).

[4Fe-4S] cluster-binding residues include Cys268, Cys271, Cys303, and Glu310.

The protein belongs to the IspG family. It depends on [4Fe-4S] cluster as a cofactor.

The enzyme catalyses (2E)-4-hydroxy-3-methylbut-2-enyl diphosphate + oxidized [flavodoxin] + H2O + 2 H(+) = 2-C-methyl-D-erythritol 2,4-cyclic diphosphate + reduced [flavodoxin]. Its pathway is isoprenoid biosynthesis; isopentenyl diphosphate biosynthesis via DXP pathway; isopentenyl diphosphate from 1-deoxy-D-xylulose 5-phosphate: step 5/6. Its function is as follows. Converts 2C-methyl-D-erythritol 2,4-cyclodiphosphate (ME-2,4cPP) into 1-hydroxy-2-methyl-2-(E)-butenyl 4-diphosphate. This is 4-hydroxy-3-methylbut-2-en-1-yl diphosphate synthase (flavodoxin) from Bacillus cereus (strain AH187).